A 358-amino-acid chain; its full sequence is DNA-directed RNA polymerase subunit alpha (358 aa).

The interval 1 to 244 (MENKLFSCIE…NLFLSIYDTS (244 aa)) is alpha N-terminal domain (alpha-NTD). The interval 287–358 (YKTSFDKNLT…KMVKYGTVNK (72 aa)) is alpha C-terminal domain (alpha-CTD).

This sequence belongs to the RNA polymerase alpha chain family. Homodimer. The RNAP catalytic core consists of 2 alpha, 1 beta, 1 beta' and 1 omega subunit. When a sigma factor is associated with the core the holoenzyme is formed, which can initiate transcription.

The protein localises to the plastid. Its subcellular location is the chloroplast. The enzyme catalyses RNA(n) + a ribonucleoside 5'-triphosphate = RNA(n+1) + diphosphate. DNA-dependent RNA polymerase catalyzes the transcription of DNA into RNA using the four ribonucleoside triphosphates as substrates. The protein is DNA-directed RNA polymerase subunit alpha (rpoA) of Bigelowiella natans (Pedinomonas minutissima).